Here is a 429-residue protein sequence, read N- to C-terminus: Glutamyl-tRNA reductase (429 aa).

Substrate is bound by residues T49–R52, S107, E112–Q114, and Q118. C50 (nucleophile) is an active-site residue. Position 187 to 192 (G187 to I192) interacts with NADP(+).

Belongs to the glutamyl-tRNA reductase family. Homodimer.

The catalysed reaction is (S)-4-amino-5-oxopentanoate + tRNA(Glu) + NADP(+) = L-glutamyl-tRNA(Glu) + NADPH + H(+). It functions in the pathway porphyrin-containing compound metabolism; protoporphyrin-IX biosynthesis; 5-aminolevulinate from L-glutamyl-tRNA(Glu): step 1/2. Its function is as follows. Catalyzes the NADPH-dependent reduction of glutamyl-tRNA(Glu) to glutamate 1-semialdehyde (GSA). The chain is Glutamyl-tRNA reductase from Pseudomonas fluorescens (strain SBW25).